We begin with the raw amino-acid sequence, 416 residues long: MSSWDVSMSNHAGLVFNPIRTVSDNAKPSPSPKPIIKLSVGDPTLDKNLLTSAAQIKKLKEAIDSQECNGYFPTVGSPEAREAVATWWRNSFVHKEELKSTIVKDNVVLCSGGSHGILMAITAICDAGDYALVPQPGFPHYETVCKAYGIGMHFYNCRPENDWEADLDEIRRLKDDKTKLLIVTNPSNPCGSNFSRKHVEDIVRLAEELRLPLFSDEIYAGMVFKGKDPNATFTSVADFETTVPRVILGGTAKNLVVPGWRLGWLLYVDPHGNGPSFLEGLKRVGMLVCGPCTVVQAALGEALLNTPQEHLDQIVAKIEESAMYLYNHIGECIGLAPTMPRGAMYLMSRIDLEKYRDIKTDVEFFEKLLEEENVQVLPGTIFHAPGFTRLTTTRPVEVYREAVERIKAFCQRHAAV.

At K253 the chain carries N6-(pyridoxal phosphate)lysine.

Belongs to the class-I pyridoxal-phosphate-dependent aminotransferase family. Homodimer. It depends on pyridoxal 5'-phosphate as a cofactor. Post-translationally, the N-terminus is blocked.

Its subcellular location is the cytoplasm. It is found in the mitochondrion. The enzyme catalyses L-tyrosine + 2-oxoglutarate = 3-(4-hydroxyphenyl)pyruvate + L-glutamate. The protein operates within amino-acid degradation; L-phenylalanine degradation; acetoacetate and fumarate from L-phenylalanine: step 2/6. Its function is as follows. Transaminase involved in tyrosine breakdown. Converts tyrosine to p-hydroxyphenylpyruvate. This is Tyrosine aminotransferase from Trypanosoma cruzi.